We begin with the raw amino-acid sequence, 194 residues long: Holliday junction branch migration complex subunit RuvA (194 aa).

Residues 1 to 63 (MFEYMKGMIV…EDEAHLYGFV (63 aa)) form a domain I region. A domain II region spans residues 64–142 (DKEELAMFKK…DSQVEYDQNF (79 aa)). Residues 143–146 (FNHE) are flexible linker. The segment at 146–194 (ENKNNNEVVDALMALGYTKHEGEQAASAVRDTSLSTEEMIRKALNWLAR) is domain III.

The protein belongs to the RuvA family. Homotetramer. Forms an RuvA(8)-RuvB(12)-Holliday junction (HJ) complex. HJ DNA is sandwiched between 2 RuvA tetramers; dsDNA enters through RuvA and exits via RuvB. An RuvB hexamer assembles on each DNA strand where it exits the tetramer. Each RuvB hexamer is contacted by two RuvA subunits (via domain III) on 2 adjacent RuvB subunits; this complex drives branch migration. In the full resolvosome a probable DNA-RuvA(4)-RuvB(12)-RuvC(2) complex forms which resolves the HJ.

It is found in the cytoplasm. Functionally, the RuvA-RuvB-RuvC complex processes Holliday junction (HJ) DNA during genetic recombination and DNA repair, while the RuvA-RuvB complex plays an important role in the rescue of blocked DNA replication forks via replication fork reversal (RFR). RuvA specifically binds to HJ cruciform DNA, conferring on it an open structure. The RuvB hexamer acts as an ATP-dependent pump, pulling dsDNA into and through the RuvAB complex. HJ branch migration allows RuvC to scan DNA until it finds its consensus sequence, where it cleaves and resolves the cruciform DNA. The protein is Holliday junction branch migration complex subunit RuvA of Alkaliphilus metalliredigens (strain QYMF).